A 250-amino-acid chain; its full sequence is 5'-nucleotidase SurE (250 aa).

Positions 8, 9, 39, and 91 each coordinate a divalent metal cation.

Belongs to the SurE nucleotidase family. A divalent metal cation serves as cofactor.

It is found in the cytoplasm. The catalysed reaction is a ribonucleoside 5'-phosphate + H2O = a ribonucleoside + phosphate. Functionally, nucleotidase that shows phosphatase activity on nucleoside 5'-monophosphates. The protein is 5'-nucleotidase SurE of Shewanella halifaxensis (strain HAW-EB4).